Reading from the N-terminus, the 305-residue chain is Mitochondrial citrate transporter D (305 aa).

Solcar repeat units lie at residues 10–101 (LPFG…WGAF), 111–197 (QTQS…VRAQ), and 211–298 (RNDL…VMDF). Helical transmembrane passes span 16–36 (FIAG…LDVV), 78–98 (SAPI…NDSW), 118–137 (LTGA…FELV), 176–196 (TLWR…QVRA), 208–228 (QQTR…TILN), and 270–291 (LYKG…LLVV).

The protein belongs to the mitochondrial carrier (TC 2.A.29) family.

Its subcellular location is the mitochondrion inner membrane. The catalysed reaction is citrate(in) + H(+)(in) = citrate(out) + H(+)(out). Mitochondrial transporter that mediates citrate export from mitochondria to cytoplasm. Both ctpA, ctpB, and ctpD play important roles in citric acid transport across the mitochondrial membrane and function in a redundant manner. This Aspergillus niger (strain ATCC 1015 / CBS 113.46 / FGSC A1144 / LSHB Ac4 / NCTC 3858a / NRRL 328 / USDA 3528.7) protein is Mitochondrial citrate transporter D.